The primary structure comprises 141 residues: Large ribosomal subunit protein uL11 (141 aa).

This sequence belongs to the universal ribosomal protein uL11 family. As to quaternary structure, part of the ribosomal stalk of the 50S ribosomal subunit. Interacts with L10 and the large rRNA to form the base of the stalk. L10 forms an elongated spine to which L12 dimers bind in a sequential fashion forming a multimeric L10(L12)X complex. Post-translationally, one or more lysine residues are methylated.

Its function is as follows. Forms part of the ribosomal stalk which helps the ribosome interact with GTP-bound translation factors. The polypeptide is Large ribosomal subunit protein uL11 (Bacillus cereus (strain ATCC 10987 / NRS 248)).